Reading from the N-terminus, the 87-residue chain is Cell division topological specificity factor (87 aa).

This sequence belongs to the MinE family.

Functionally, prevents the cell division inhibition by proteins MinC and MinD at internal division sites while permitting inhibition at polar sites. This ensures cell division at the proper site by restricting the formation of a division septum at the midpoint of the long axis of the cell. The protein is Cell division topological specificity factor of Leptothrix cholodnii (strain ATCC 51168 / LMG 8142 / SP-6) (Leptothrix discophora (strain SP-6)).